Consider the following 171-residue polypeptide: Photosystem I assembly protein Ycf3 (171 aa).

3 TPR repeats span residues 33–66 (AFSY…EEDP), 70–103 (SYIL…NSRL), and 118–151 (GTKS…APNN).

It belongs to the Ycf3 family.

The protein localises to the plastid. The protein resides in the chloroplast thylakoid membrane. Its function is as follows. Essential for the assembly of the photosystem I (PSI) complex. May act as a chaperone-like factor to guide the assembly of the PSI subunits. This is Photosystem I assembly protein Ycf3 from Emiliania huxleyi (Coccolithophore).